The sequence spans 379 residues: DNA replication and repair protein RecF (379 aa).

An ATP-binding site is contributed by 30 to 37; that stretch reads GKNAQGKT.

This sequence belongs to the RecF family.

It localises to the cytoplasm. Functionally, the RecF protein is involved in DNA metabolism; it is required for DNA replication and normal SOS inducibility. RecF binds preferentially to single-stranded, linear DNA. It also seems to bind ATP. This Ligilactobacillus salivarius (strain UCC118) (Lactobacillus salivarius) protein is DNA replication and repair protein RecF.